A 102-amino-acid polypeptide reads, in one-letter code: Urease subunit beta (102 aa).

The protein belongs to the urease beta subunit family. As to quaternary structure, heterotrimer of UreA (gamma), UreB (beta) and UreC (alpha) subunits. Three heterotrimers associate to form the active enzyme.

Its subcellular location is the cytoplasm. It carries out the reaction urea + 2 H2O + H(+) = hydrogencarbonate + 2 NH4(+). It functions in the pathway nitrogen metabolism; urea degradation; CO(2) and NH(3) from urea (urease route): step 1/1. This is Urease subunit beta from Clostridium perfringens.